An 85-amino-acid chain; its full sequence is CDC42 small effector protein 2 (85 aa).

Residues C10 and C11 are each lipidated (S-palmitoyl cysteine). A CRIB domain is found at 29–42 (IGEPTNFVHTAHVG).

The protein belongs to the CDC42SE/SPEC family.

The protein resides in the cytoplasm. It localises to the cytoskeleton. The protein localises to the cell membrane. Probably involved in the organization of the actin cytoskeleton by acting downstream of CDC42, inducing actin filament assembly. The protein is CDC42 small effector protein 2 (cdc42se2) of Danio rerio (Zebrafish).